The sequence spans 889 residues: Coatomer subunit beta' (889 aa).

6 WD repeats span residues Asn-11–Asn-41, Val-53–Asn-83, Ala-95–Asn-125, Gly-138–Ser-169, Gly-182–Asp-214, and Gly-226–Asn-256. A Phosphoserine modification is found at Ser-326. Residues Cys-806–Ser-889 are disordered. Residues Asp-836–Glu-864 show a composition bias toward basic and acidic residues. Over residues Pro-866–Glu-879 the composition is skewed to low complexity.

The protein belongs to the WD repeat COPB2 family. In terms of assembly, oligomeric complex that consists of at least the alpha, beta, beta', gamma, delta, epsilon and zeta subunits. Interacts with the ESCRT-0 subunit VPS27.

It is found in the cytoplasm. The protein resides in the golgi apparatus membrane. It localises to the cytoplasmic vesicle. Its subcellular location is the COPI-coated vesicle membrane. Functionally, the coatomer is a cytosolic protein complex that binds to dilysine motifs and reversibly associates with Golgi non-clathrin-coated vesicles, which further mediate biosynthetic protein transport from the ER, via the Golgi up to the trans Golgi network. Coatomer complex is required for budding from Golgi membranes, and is essential for the retrograde Golgi-to-ER transport of dilysine-tagged proteins. The protein is Coatomer subunit beta' (SEC27) of Saccharomyces cerevisiae (strain ATCC 204508 / S288c) (Baker's yeast).